A 330-amino-acid chain; its full sequence is Transcription factor TGA5 (330 aa).

Polar residues predominate over residues 1-13 (MGDTSPRTSVSTD). Positions 1-64 (MGDTSPRTSV…REAARKSRLR (64 aa)) are disordered. A compositionally biased stretch (basic and acidic residues) spans 35 to 47 (SSDRSKSKMDQKT). Residues 44 to 107 (DQKTLRRLAQ…SSGDQAHSTA (64 aa)) form the bZIP domain. Coiled-coil stretches lie at residues 45-98 (QKTL…FISS) and 211-244 (EQQS…SLAD). The interval 46–66 (KTLRRLAQNREAARKSRLRKK) is basic motif. The interval 72–86 (LENSRLKLTQLEQEL) is leucine-zipper. Residues 111-327 (AMAFDVEYRR…RALSSLWLAR (217 aa)) enclose the DOG1 domain.

This sequence belongs to the bZIP family. As to quaternary structure, binds DNA as a dimer. Interaction with the Dof domain protein OBP1 enhances the binding to the ocs element. Interacts with NPR1, NPR3 and NPR4. Predominantly expressed in roots.

The protein localises to the nucleus. Its function is as follows. Transcriptional activator that binds specifically to the DNA sequence 5'-TGACG-3'. Recognizes ocs elements like the as-1 motif of the cauliflower mosaic virus 35S promoter. Binding to the as-1-like cis elements mediate auxin- and salicylic acid-inducible transcription. May be involved in the induction of the systemic acquired resistance (SAR) via its interaction with NPR1. Could also bind to the Hex-motif (5'-TGACGTGG-3') another cis-acting element found in plant histone promoters. The polypeptide is Transcription factor TGA5 (TGA5) (Arabidopsis thaliana (Mouse-ear cress)).